We begin with the raw amino-acid sequence, 512 residues long: GMP synthase [glutamine-hydrolyzing] (512 aa).

Positions 3 to 196 constitute a Glutamine amidotransferase type-1 domain; it reads NILILDFGSQ…VKHICQASET (194 aa). The active-site Nucleophile is the Cys80. Active-site residues include His169 and Glu171. The 191-residue stretch at 197 to 387 folds into the GMPS ATP-PPase domain; sequence WKIETIEKQL…LGLPDVLISR (191 aa). 225–231 lines the ATP pocket; it reads SGGVDSS.

In terms of assembly, homodimer.

The enzyme catalyses XMP + L-glutamine + ATP + H2O = GMP + L-glutamate + AMP + diphosphate + 2 H(+). Its pathway is purine metabolism; GMP biosynthesis; GMP from XMP (L-Gln route): step 1/1. Its function is as follows. Catalyzes the synthesis of GMP from XMP. This is GMP synthase [glutamine-hydrolyzing] from Chlamydia caviae (strain ATCC VR-813 / DSM 19441 / 03DC25 / GPIC) (Chlamydophila caviae).